Consider the following 328-residue polypeptide: Phosphate acetyltransferase (328 aa).

It belongs to the phosphate acetyltransferase and butyryltransferase family.

The protein resides in the cytoplasm. It carries out the reaction acetyl-CoA + phosphate = acetyl phosphate + CoA. The protein operates within metabolic intermediate biosynthesis; acetyl-CoA biosynthesis; acetyl-CoA from acetate: step 2/2. This is Phosphate acetyltransferase (pta) from Thermoanaerobacterium thermosaccharolyticum (strain ATCC 7956 / DSM 571 / NCIMB 9385 / NCA 3814 / NCTC 13789 / WDCM 00135 / 2032) (Clostridium thermosaccharolyticum).